We begin with the raw amino-acid sequence, 361 residues long: tRNA-specific 2-thiouridylase MnmA (361 aa).

ATP is bound by residues 6-13 and L32; that span reads AMSGGVDS. C101 acts as the Nucleophile in catalysis. The cysteines at positions 101 and 194 are disulfide-linked. G125 contacts ATP. Residues 144-146 form an interaction with tRNA region; it reads KDQ. C194 serves as the catalytic Cysteine persulfide intermediate.

It belongs to the MnmA/TRMU family.

Its subcellular location is the cytoplasm. The enzyme catalyses S-sulfanyl-L-cysteinyl-[protein] + uridine(34) in tRNA + AH2 + ATP = 2-thiouridine(34) in tRNA + L-cysteinyl-[protein] + A + AMP + diphosphate + H(+). Catalyzes the 2-thiolation of uridine at the wobble position (U34) of tRNA, leading to the formation of s(2)U34. The chain is tRNA-specific 2-thiouridylase MnmA from Corynebacterium aurimucosum (strain ATCC 700975 / DSM 44827 / CIP 107346 / CN-1) (Corynebacterium nigricans).